The primary structure comprises 761 residues: Translational repressor ifet-1 (761 aa).

Disordered stretches follow at residues 101–274, 386–446, 557–592, 681–702, and 730–761; these read SPQR…SSGG, KGME…QHLH, VQRQ…AHNQ, QQAQ…QQHQ, and GSQF…AVPK. 3 stretches are compositionally biased toward basic and acidic residues: residues 114–128, 164–189, and 212–222; these read PTDD…ERLG, RGTR…EERL, and IELRGFDEPKK. Polar residues-rich tracts occupy residues 400–410, 557–568, 576–592, and 690–702; these read QDPSQQAQLLQ, VQRQLQKSSSNA, SQSP…AHNQ, and ERQG…QQHQ.

Interacts with cgh-1. Interacts with ife-1 and oma-1. As to expression, in the embryo, significantly enriched in the germ cell lineage.

It localises to the cytoplasm. Functionally, involved in translational repression of multiple mRNAs in the distal gonad. Recruited to the 3' untranslated region (UTR) of zif-1 by oma-1 and is required for translational repression of zif-1. May also be involved in translational repression of mei-1 through recruitment to the mei-1 3' UTR by oma-1. Required for oogenesis but not spermatogenesis, for P granule formation and for the localization of car-1 and cgh-1 to P granules. Required for normal spindle orientation in early embryos. The polypeptide is Translational repressor ifet-1 (Caenorhabditis elegans).